The sequence spans 207 residues: Ribosome maturation factor RimP (207 aa).

The disordered stretch occupies residues 171–207 (RAPGGAPEEGEEDTTEAAPEGAGKSPKPGRRPARKTH). Residues 197–207 (KPGRRPARKTH) show a composition bias toward basic residues.

The protein belongs to the RimP family.

It localises to the cytoplasm. Functionally, required for maturation of 30S ribosomal subunits. The sequence is that of Ribosome maturation factor RimP from Gluconacetobacter diazotrophicus (strain ATCC 49037 / DSM 5601 / CCUG 37298 / CIP 103539 / LMG 7603 / PAl5).